We begin with the raw amino-acid sequence, 215 residues long: High mobility group protein B1 (215 aa).

The segment at residues 9–79 (PRGKMSSYAF…RYEKEMKNYV (71 aa)) is a DNA-binding region (HMG box 1). C23 is modified (cysteine sulfonic acid (-SO3H); alternate). Cysteines 23 and 45 form a disulfide. The segment at 27–43 (HKKKHPDASVNFSEFSK) is NLS 1. Positions 27–43 (HKKKHPDASVNFSEFSK) match the Nuclear localization signal (NLS) 1 motif. The residue at position 45 (C45) is a Cysteine sulfonic acid (-SO3H); alternate. The disordered stretch occupies residues 75–95 (MKNYVPPKGETKKKFKDPNAP). A compositionally biased stretch (basic and acidic residues) spans 83 to 94 (GETKKKFKDPNA). The HMG box 2 DNA-binding region spans 95-163 (PKRPPSAFFL…KYEKDIAAYR (69 aa)). Residue C106 is modified to Cysteine sulfonic acid (-SO3H). The segment covering 166 to 179 (GKVDAGKKVVAKAE) has biased composition (basic and acidic residues). The disordered stretch occupies residues 166–215 (GKVDAGKKVVAKAEKSKKKKEEEEDEDEDEEDEEDEEEEEEEEEDDDDDE). The segment at 178–184 (AEKSKKK) is NLS 2. A Nuclear localization signal (NLS) 2 motif is present at residues 178–184 (AEKSKKK). The span at 187-215 (EEEDEDEDEEDEEDEEEEEEEEEDDDDDE) shows a compositional bias: acidic residues. The segment at 196–210 (EDEEDEEEEEEEEED) is involved in intramolecular interaction with K-3. The segment at 211–215 (DDDDE) is involved in interaction with histone H3.

It belongs to the HMGB family. Post-translationally, reduction/oxidation of cysteine residues Cys-23, Cys-45 and Cys-106 and a possible intramolecular disulfide bond involving Cys-23 and Cys-45 give rise to different redox forms with specific functional activities: 1- fully reduced HMGB1 (HMGB1C23hC45hC106h), 2- disulfide HMGB1 (HMGB1C23-C45C106h) and 3- sulfonyl HMGB1 (HMGB1C23soC45soC106so).

Its subcellular location is the nucleus. It localises to the chromosome. The protein localises to the cytoplasm. The protein resides in the secreted. Its function is as follows. Multifunctional redox sensitive protein with various roles in different cellular compartments. Nuclear functions are attributed to fully reduced HGMB1. Associates with chromatin and binds DNA with a preference to non-canonical DNA structures such as single-stranded DNA, DNA-containing cruciforms or bent structures, supercoiled DNA and ZDNA. Can bent DNA and enhance DNA flexibility by looping thus providing a mechanism to promote activities on various gene promoters. Can restructure the canonical nucleosome. Proposed to be an universal biosensor for nucleic acids. May promote inflammatory response to sterile and infectious signals and may be involved in the coordination and integration of innate and adaptive immune responses. In the cytoplasm may function as sensor and/or chaperone for immunogenic nucleic acids, and mediate autophagy. May act as danger associated molecular pattern (DAMP) molecule that amplifies immune responses during tissue injury. This Gallus gallus (Chicken) protein is High mobility group protein B1 (HMGB1).